Here is a 201-residue protein sequence, read N- to C-terminus: ATP-dependent Clp protease proteolytic subunit (201 aa).

Catalysis depends on S101, which acts as the Nucleophile. H126 is an active-site residue.

This sequence belongs to the peptidase S14 family. As to quaternary structure, fourteen ClpP subunits assemble into 2 heptameric rings which stack back to back to give a disk-like structure with a central cavity, resembling the structure of eukaryotic proteasomes.

Its subcellular location is the cytoplasm. It catalyses the reaction Hydrolysis of proteins to small peptides in the presence of ATP and magnesium. alpha-casein is the usual test substrate. In the absence of ATP, only oligopeptides shorter than five residues are hydrolyzed (such as succinyl-Leu-Tyr-|-NHMec, and Leu-Tyr-Leu-|-Tyr-Trp, in which cleavage of the -Tyr-|-Leu- and -Tyr-|-Trp bonds also occurs).. Its function is as follows. Cleaves peptides in various proteins in a process that requires ATP hydrolysis. Has a chymotrypsin-like activity. Plays a major role in the degradation of misfolded proteins. The polypeptide is ATP-dependent Clp protease proteolytic subunit (Francisella tularensis subsp. tularensis (strain FSC 198)).